Here is a 313-residue protein sequence, read N- to C-terminus: Carbamate kinase 2 (313 aa).

It belongs to the carbamate kinase family.

It is found in the cytoplasm. The enzyme catalyses hydrogencarbonate + NH4(+) + ATP = carbamoyl phosphate + ADP + H2O + H(+). Its pathway is metabolic intermediate metabolism; carbamoyl phosphate degradation; CO(2) and NH(3) from carbamoyl phosphate: step 1/1. The polypeptide is Carbamate kinase 2 (arcC2) (Staphylococcus aureus (strain MRSA252)).